Consider the following 724-residue polypeptide: Threonine--tRNA ligase 2, cytoplasmic (724 aa).

A2 carries the post-translational modification N-acetylalanine. Positions 44–72 (QAEGPCLTREVAQLRAENRELRHCLYRLR) form a coiled coil. The segment at 90 to 112 (RAEAGRAAAGAQPPPSQSLEEDV) is disordered. One can recognise a TGS domain in the interval 155 to 220 (DSSNVITVRV…EGDATVELLT (66 aa)). At S451 the chain carries Phosphoserine.

This sequence belongs to the class-II aminoacyl-tRNA synthetase family. In terms of assembly, may be a component of the multisynthetase complex (MSC), a large multi-subunit complex which contains at least eight different aminoacyl-tRNA synthetases plus three auxillary subunits AIMP1, AIMP2 and EEF1E1. Interacts with the MSC components EPRS1, AIMP1, AIMP2 and KARS1.

Its subcellular location is the cytoplasm. The protein resides in the nucleus. It carries out the reaction tRNA(Thr) + L-threonine + ATP = L-threonyl-tRNA(Thr) + AMP + diphosphate + H(+). Catalyzes the attachment of threonine to tRNA(Thr) in a two-step reaction: threonine is first activated by ATP to form Thr-AMP and then transferred to the acceptor end of tRNA(Thr). Also edits incorrectly charged tRNA(Thr) via its editing domain, at the post-transfer stage. This Bos taurus (Bovine) protein is Threonine--tRNA ligase 2, cytoplasmic (TARS3).